The sequence spans 1265 residues: Kinesin-like protein Klp98A (1265 aa).

One can recognise a Kinesin motor domain in the interval 3-364; the sequence is SLKVAVRVRP…LRYANRAKNI (362 aa). 100–107 contacts ATP; that stretch reads GQTGSGKT. Disordered stretches follow at residues 597 to 621, 828 to 864, and 884 to 954; these read GASPYKRPERQYYPQRPMSRDDPEL, EAESQAMRAKKQNMKLQLGNKSMSTSTSTNEADDVSK, and VSSP…CTPS. Coiled coils occupy residues 619-670 and 768-848; these read PELQ…EEMD and AQFI…LGNK. Polar residues-rich tracts occupy residues 846–857, 884–901, and 917–927; these read GNKSMSTSTSTN, VSSPTITEGQQSPLSNCS, and SGSSEETSRTC. Gly residues predominate over residues 933-946; that stretch reads SGSGSGSVGIGGSG. Residues 1035–1071 are a coiled coil; it reads DLNKAQLDEHIADLQDLQRRYIQMEQEMLQSVQDLEA. The PX domain occupies 1129–1259; the sequence is GEHFITIPSF…SFFKKGLFEN (131 aa).

The protein belongs to the TRAFAC class myosin-kinesin ATPase superfamily. Kinesin family. As to quaternary structure, interacts with Atg8a and Rab14.

The protein resides in the early endosome. Its function is as follows. Plus end-directed motor protein involved in asymmetric cell division of sensory organ precursor (SOP) cells by playing a role in the asymmetric localization of Sara-expressing endosomes to the pIIa daughter cell but not to the pIIb cell. Targets Sara-expressing endosomes to the central spindle which is symmetrically arranged in early cell division. During late cytokinesis, central spindle asymmetry is generated by enrichment of Patronin on the pIIb side which protects microtubules from depolymerization by Klp10A while unprotected microtubules on the pIIa side are disassembled by Klp10A, leading to the asymmetric delivery of Sara-expressing endosomes to the pIIa daughter cell. Also plays a role in regulation of autophagosome formation, fusion and positioning and is required for normal localization of Rab14. The polypeptide is Kinesin-like protein Klp98A (Drosophila melanogaster (Fruit fly)).